We begin with the raw amino-acid sequence, 90 residues long: Probable dynein light chain 2, cytoplasmic (90 aa).

This sequence belongs to the dynein light chain family.

The protein localises to the cytoplasm. The protein resides in the cytoskeleton. Its function is as follows. Acts as one of several non-catalytic accessory components of a dynein complex. The polypeptide is Probable dynein light chain 2, cytoplasmic (dlc-2) (Caenorhabditis elegans).